We begin with the raw amino-acid sequence, 371 residues long: Cytochrome b (371 aa).

Helical transmembrane passes span 25–45 (FGSMLLTCLMLQVLTGFFLAI), 69–90 (WIMQNTHAIGASLFFICIYIHI), 105–125 (WLSGVTLLMTLMATAFFGYVL), and 170–190 (FCALHFILPFIIISLSSIHII). Heme b contacts are provided by His-75 and His-89. Heme b is bound by residues His-174 and His-188. His-193 serves as a coordination point for a ubiquinone. 4 consecutive transmembrane segments (helical) span residues 218-238 (YKDFMTTTSMIILLPISLSVS), 280-300 (LGGTLALLMSILILTLPPFTH), 312-332 (LSQTLFWTLIATFVMITWTAT), and 339-358 (FITISQLTSIFYFSFFIMNP).

This sequence belongs to the cytochrome b family. In terms of assembly, the cytochrome bc1 complex contains 3 respiratory subunits (MT-CYB, CYC1 and UQCRFS1), 2 core proteins (UQCRC1 and UQCRC2) and probably 6 low-molecular weight proteins. Heme b is required as a cofactor.

It localises to the mitochondrion inner membrane. Its function is as follows. Component of the ubiquinol-cytochrome c reductase complex (complex III or cytochrome b-c1 complex) that is part of the mitochondrial respiratory chain. The b-c1 complex mediates electron transfer from ubiquinol to cytochrome c. Contributes to the generation of a proton gradient across the mitochondrial membrane that is then used for ATP synthesis. The chain is Cytochrome b (MT-CYB) from Micrurus tener microgalbineus (Spotted coral snake).